A 694-amino-acid chain; its full sequence is Elongation factor G (694 aa).

The region spanning 8–285 (EKVRNIGIAA…AVVELLPSPQ (278 aa)) is the tr-type G domain. GTP is bound by residues 17-24 (AHIDAGKT), 81-85 (DTPGH), and 135-138 (NKMD).

It belongs to the TRAFAC class translation factor GTPase superfamily. Classic translation factor GTPase family. EF-G/EF-2 subfamily.

The protein resides in the cytoplasm. Functionally, catalyzes the GTP-dependent ribosomal translocation step during translation elongation. During this step, the ribosome changes from the pre-translocational (PRE) to the post-translocational (POST) state as the newly formed A-site-bound peptidyl-tRNA and P-site-bound deacylated tRNA move to the P and E sites, respectively. Catalyzes the coordinated movement of the two tRNA molecules, the mRNA and conformational changes in the ribosome. In Synechococcus sp. (strain ATCC 27144 / PCC 6301 / SAUG 1402/1) (Anacystis nidulans), this protein is Elongation factor G (fusA).